The following is a 241-amino-acid chain: Large ribosomal subunit protein uL3 (241 aa).

Disordered stretches follow at residues 139 to 166 (VSHR…PGHM) and 209 to 241 (KKPL…KEGA). N5-methylglutamine is present on Gln151.

Belongs to the universal ribosomal protein uL3 family. Part of the 50S ribosomal subunit. Forms a cluster with proteins L14 and L19. Post-translationally, methylated by PrmB.

In terms of biological role, one of the primary rRNA binding proteins, it binds directly near the 3'-end of the 23S rRNA, where it nucleates assembly of the 50S subunit. This Nitrobacter hamburgensis (strain DSM 10229 / NCIMB 13809 / X14) protein is Large ribosomal subunit protein uL3.